Here is a 1047-residue protein sequence, read N- to C-terminus: Isoleucine--tRNA ligase (1047 aa).

The short motif at 52 to 62 (PTANGMPGAHH) is the 'HIGH' region element. The 'KMSKS' region signature appears at 600–604 (KMSKH). Residue lysine 603 coordinates ATP.

It belongs to the class-I aminoacyl-tRNA synthetase family. IleS type 2 subfamily. Monomer. It depends on Zn(2+) as a cofactor.

Its subcellular location is the cytoplasm. It carries out the reaction tRNA(Ile) + L-isoleucine + ATP = L-isoleucyl-tRNA(Ile) + AMP + diphosphate. In terms of biological role, catalyzes the attachment of isoleucine to tRNA(Ile). As IleRS can inadvertently accommodate and process structurally similar amino acids such as valine, to avoid such errors it has two additional distinct tRNA(Ile)-dependent editing activities. One activity is designated as 'pretransfer' editing and involves the hydrolysis of activated Val-AMP. The other activity is designated 'posttransfer' editing and involves deacylation of mischarged Val-tRNA(Ile). The protein is Isoleucine--tRNA ligase of Streptomyces avermitilis (strain ATCC 31267 / DSM 46492 / JCM 5070 / NBRC 14893 / NCIMB 12804 / NRRL 8165 / MA-4680).